We begin with the raw amino-acid sequence, 261 residues long: Cytochrome c oxidase subunit 3 (261 aa).

At 1 to 15 (MTHQTHAYHMVNPSP) the chain is on the mitochondrial matrix side. A helical transmembrane segment spans residues 16-34 (WPLTGALSALLMTSGLTMW). Residues 35 to 40 (FHYNST) lie on the Mitochondrial intermembrane side of the membrane. The helical transmembrane segment at 41–66 (ILLMLGLTTNMLTMYQWWRDIIREST) threads the bilayer. The Mitochondrial matrix portion of the chain corresponds to 67–72 (FQGHHT). Residues 73–105 (PTVQKGLRYGMILFIISEVLFFTGFFWAFYHSS) traverse the membrane as a helical segment. Topologically, residues 106 to 128 (LAPTPELGGCWPPTGIHPLNPLE) are mitochondrial intermembrane. Residues 129 to 152 (VPLLNTSVLLASGVSITWAHHSLM) traverse the membrane as a helical segment. Residues 153–155 (EGD) are Mitochondrial matrix-facing. Residues 156 to 183 (RNHMLQALFITIALGIYFTLLQASEYYE) form a helical membrane-spanning segment. Over 184-190 (APFTISD) the chain is Mitochondrial intermembrane. A helical transmembrane segment spans residues 191-223 (GVYGSTFFVATGFHGLHVIIGSTFLIVCFFRQL). Residues 224–232 (KFHFTSSHH) are Mitochondrial matrix-facing. A helical membrane pass occupies residues 233-256 (FGFEAAAWYWHFVDVVWLFLYVSI). Residues 257–261 (YWWGS) are Mitochondrial intermembrane-facing.

This sequence belongs to the cytochrome c oxidase subunit 3 family. Component of the cytochrome c oxidase (complex IV, CIV), a multisubunit enzyme composed of 14 subunits. The complex is composed of a catalytic core of 3 subunits MT-CO1, MT-CO2 and MT-CO3, encoded in the mitochondrial DNA, and 11 supernumerary subunits COX4I, COX5A, COX5B, COX6A, COX6B, COX6C, COX7A, COX7B, COX7C, COX8 and NDUFA4, which are encoded in the nuclear genome. The complex exists as a monomer or a dimer and forms supercomplexes (SCs) in the inner mitochondrial membrane with NADH-ubiquinone oxidoreductase (complex I, CI) and ubiquinol-cytochrome c oxidoreductase (cytochrome b-c1 complex, complex III, CIII), resulting in different assemblies (supercomplex SCI(1)III(2)IV(1) and megacomplex MCI(2)III(2)IV(2)).

It localises to the mitochondrion inner membrane. It catalyses the reaction 4 Fe(II)-[cytochrome c] + O2 + 8 H(+)(in) = 4 Fe(III)-[cytochrome c] + 2 H2O + 4 H(+)(out). Component of the cytochrome c oxidase, the last enzyme in the mitochondrial electron transport chain which drives oxidative phosphorylation. The respiratory chain contains 3 multisubunit complexes succinate dehydrogenase (complex II, CII), ubiquinol-cytochrome c oxidoreductase (cytochrome b-c1 complex, complex III, CIII) and cytochrome c oxidase (complex IV, CIV), that cooperate to transfer electrons derived from NADH and succinate to molecular oxygen, creating an electrochemical gradient over the inner membrane that drives transmembrane transport and the ATP synthase. Cytochrome c oxidase is the component of the respiratory chain that catalyzes the reduction of oxygen to water. Electrons originating from reduced cytochrome c in the intermembrane space (IMS) are transferred via the dinuclear copper A center (CU(A)) of subunit 2 and heme A of subunit 1 to the active site in subunit 1, a binuclear center (BNC) formed by heme A3 and copper B (CU(B)). The BNC reduces molecular oxygen to 2 water molecules using 4 electrons from cytochrome c in the IMS and 4 protons from the mitochondrial matrix. This Tragelaphus imberbis (Lesser kudu) protein is Cytochrome c oxidase subunit 3 (MT-CO3).